The chain runs to 364 residues: Chorismate synthase (364 aa).

Arginine 47 lines the NADP(+) pocket. FMN contacts are provided by residues 125–127 (RFS), glycine 285, 300–304 (KPTPS), and arginine 327.

This sequence belongs to the chorismate synthase family. As to quaternary structure, homotetramer. The cofactor is FMNH2.

The catalysed reaction is 5-O-(1-carboxyvinyl)-3-phosphoshikimate = chorismate + phosphate. It participates in metabolic intermediate biosynthesis; chorismate biosynthesis; chorismate from D-erythrose 4-phosphate and phosphoenolpyruvate: step 7/7. Catalyzes the anti-1,4-elimination of the C-3 phosphate and the C-6 proR hydrogen from 5-enolpyruvylshikimate-3-phosphate (EPSP) to yield chorismate, which is the branch point compound that serves as the starting substrate for the three terminal pathways of aromatic amino acid biosynthesis. This reaction introduces a second double bond into the aromatic ring system. This Dehalococcoides mccartyi (strain ATCC BAA-2100 / JCM 16839 / KCTC 5957 / BAV1) protein is Chorismate synthase.